A 195-amino-acid chain; its full sequence is Glycerol-3-phosphate acyltransferase 1 (195 aa).

The next 5 membrane-spanning stretches (helical) occupy residues 6–26 (VILT…GHFL), 52–72 (LGIA…FLVV), 74–94 (LGLK…AVAG), 117–137 (LAVY…LTFL), and 168–188 (FGLG…ISLF).

This sequence belongs to the PlsY family. As to quaternary structure, probably interacts with PlsX.

It is found in the cell membrane. The enzyme catalyses an acyl phosphate + sn-glycerol 3-phosphate = a 1-acyl-sn-glycero-3-phosphate + phosphate. The protein operates within lipid metabolism; phospholipid metabolism. Functionally, catalyzes the transfer of an acyl group from acyl-phosphate (acyl-PO(4)) to glycerol-3-phosphate (G3P) to form lysophosphatidic acid (LPA). This enzyme utilizes acyl-phosphate as fatty acyl donor, but not acyl-CoA or acyl-ACP. This is Glycerol-3-phosphate acyltransferase 1 from Moorella thermoacetica (strain ATCC 39073 / JCM 9320).